The primary structure comprises 277 residues: Carbonyl reductase [NADPH] 1 (277 aa).

At Ser-2 the chain carries N-acetylserine. Phosphoserine is present on residues Ser-2 and Ser-30. NADP(+) contacts are provided by residues 10–34, 63–64, and Asn-90; these read VTGG…GDVV and DI. Residues 95-97 and Gln-106 contribute to the glutathione site; that span reads FKV. Ser-140 lines the substrate pocket. Position 193–194 (193–194) interacts with glutathione; sequence AY. Catalysis depends on Tyr-194, which acts as the Proton acceptor. Residues 194–198 and 231–233 each bind NADP(+); these read YGVTK and VRT. Lys-239 is modified (N6-1-carboxyethyl lysine).

It belongs to the short-chain dehydrogenases/reductases (SDR) family. Monomer.

It localises to the cytoplasm. It carries out the reaction a secondary alcohol + NADP(+) = a ketone + NADPH + H(+). It catalyses the reaction prostaglandin F2alpha + NADP(+) = prostaglandin E2 + NADPH + H(+). The enzyme catalyses prostaglandin E1 + NADP(+) = 15-oxoprostaglandin E1 + NADPH + H(+). The catalysed reaction is menadione + NADPH + H(+) = menadiol + NADP(+). It carries out the reaction prostaglandin D2 + NADP(+) = 15-oxoprostaglandin D2 + NADPH + H(+). It catalyses the reaction prostaglandin E2 + NADP(+) = 15-oxoprostaglandin E2 + NADPH + H(+). The enzyme catalyses prostaglandin F2alpha + NADP(+) = 15-oxoprostaglandin F2alpha + NADPH + H(+). The catalysed reaction is daunorubicin + NADPH + H(+) = 13-dihydrodaunorubicin + NADP(+). It carries out the reaction S-nitrosoglutathione + NADPH + H(+) = S-(hydroxysulfenamide)glutathione + NADP(+). It catalyses the reaction a primary alcohol + NADP(+) = an aldehyde + NADPH + H(+). The enzyme catalyses cortisol + NADPH + H(+) = 20beta-dihydrocortisol + NADP(+). The catalysed reaction is corticosterone + NADPH + H(+) = 20beta-dihydrocorticosterone + NADP(+). NADPH-dependent reductase with broad substrate specificity. Catalyzes the reduction of a wide variety of carbonyl compounds including quinones, prostaglandins, menadione, plus various xenobiotics. Catalyzes the reduction of the antitumor anthracyclines doxorubicin and daunorubicin to the cardiotoxic compounds doxorubicinol and daunorubicinol. Can convert prostaglandin E to prostaglandin F2-alpha. Can bind glutathione, which explains its higher affinity for glutathione-conjugated substrates. Catalyzes the reduction of S-nitrosoglutathione. In addition, participates in the glucocorticoid metabolism by catalyzing the NADPH-dependent cortisol/corticosterone into 20beta-dihydrocortisol (20b-DHF) or 20beta-corticosterone (20b-DHB), which are weak agonists of NR3C1 and NR3C2 in adipose tissue. This Pongo abelii (Sumatran orangutan) protein is Carbonyl reductase [NADPH] 1.